The chain runs to 535 residues: Bifunctional purine biosynthesis protein PurH (535 aa).

Positions 6–151 (TRLPIRRALI…KNHKDVAIVV (146 aa)) constitute an MGS-like domain.

Belongs to the PurH family.

It carries out the reaction (6R)-10-formyltetrahydrofolate + 5-amino-1-(5-phospho-beta-D-ribosyl)imidazole-4-carboxamide = 5-formamido-1-(5-phospho-D-ribosyl)imidazole-4-carboxamide + (6S)-5,6,7,8-tetrahydrofolate. The catalysed reaction is IMP + H2O = 5-formamido-1-(5-phospho-D-ribosyl)imidazole-4-carboxamide. Its pathway is purine metabolism; IMP biosynthesis via de novo pathway; 5-formamido-1-(5-phospho-D-ribosyl)imidazole-4-carboxamide from 5-amino-1-(5-phospho-D-ribosyl)imidazole-4-carboxamide (10-formyl THF route): step 1/1. The protein operates within purine metabolism; IMP biosynthesis via de novo pathway; IMP from 5-formamido-1-(5-phospho-D-ribosyl)imidazole-4-carboxamide: step 1/1. In Pseudomonas paraeruginosa (strain DSM 24068 / PA7) (Pseudomonas aeruginosa (strain PA7)), this protein is Bifunctional purine biosynthesis protein PurH.